We begin with the raw amino-acid sequence, 170 residues long: Large ribosomal subunit protein uL18c (170 aa).

The N-terminal 63 residues, 1–63 (MLASPALAGA…QADRIARHVR (63 aa)), are a transit peptide targeting the chloroplast.

Belongs to the universal ribosomal protein uL18 family. In terms of assembly, part of the 50S ribosomal subunit; contacts the 5S rRNA.

The protein resides in the plastid. The protein localises to the chloroplast. In terms of biological role, binds 5S rRNA, forms part of the central protuberance of the 50S subunit. The polypeptide is Large ribosomal subunit protein uL18c (RPL18) (Oryza sativa subsp. japonica (Rice)).